A 265-amino-acid polypeptide reads, in one-letter code: Diphthine synthase (265 aa).

S-adenosyl-L-methionine contacts are provided by residues Leu-10, Asp-87, Val-90, 115–116 (SI), Leu-166, Ala-209, and His-234.

The protein belongs to the diphthine synthase family. Homodimer.

It carries out the reaction 2-[(3S)-amino-3-carboxypropyl]-L-histidyl-[translation elongation factor 2] + 3 S-adenosyl-L-methionine = diphthine-[translation elongation factor 2] + 3 S-adenosyl-L-homocysteine + 3 H(+). It functions in the pathway protein modification; peptidyl-diphthamide biosynthesis. S-adenosyl-L-methionine-dependent methyltransferase that catalyzes the trimethylation of the amino group of the modified target histidine residue in translation elongation factor 2 (EF-2), to form an intermediate called diphthine. The three successive methylation reactions represent the second step of diphthamide biosynthesis. The chain is Diphthine synthase from Pyrococcus horikoshii (strain ATCC 700860 / DSM 12428 / JCM 9974 / NBRC 100139 / OT-3).